The sequence spans 270 residues: L-aspartate dehydrogenase (270 aa).

NAD(+) contacts are provided by Ala-123 and Asn-191. His-221 is an active-site residue.

This sequence belongs to the L-aspartate dehydrogenase family.

The enzyme catalyses L-aspartate + NADP(+) + H2O = oxaloacetate + NH4(+) + NADPH + H(+). It catalyses the reaction L-aspartate + NAD(+) + H2O = oxaloacetate + NH4(+) + NADH + H(+). It functions in the pathway cofactor biosynthesis; NAD(+) biosynthesis; iminoaspartate from L-aspartate (dehydrogenase route): step 1/1. Its function is as follows. Specifically catalyzes the NAD or NADP-dependent dehydrogenation of L-aspartate to iminoaspartate. The chain is L-aspartate dehydrogenase from Methanocella arvoryzae (strain DSM 22066 / NBRC 105507 / MRE50).